Consider the following 487-residue polypeptide: Selenium-binding protein 2 (487 aa).

A2 is modified (N-acetylalanine). Selenite is bound by residues C19 and C20.

Belongs to the selenium-binding protein family. In terms of tissue distribution, mostly expressed in seedlings, leaves and stems, and, to a lower extent, in flowers and roots.

Its function is as follows. Required for the fusion of female gametophyte polar nuclei. The protein is Selenium-binding protein 2 (SBP2) of Arabidopsis thaliana (Mouse-ear cress).